A 185-amino-acid polypeptide reads, in one-letter code: Ribosome-recycling factor (185 aa).

The protein belongs to the RRF family.

The protein resides in the cytoplasm. Functionally, responsible for the release of ribosomes from messenger RNA at the termination of protein biosynthesis. May increase the efficiency of translation by recycling ribosomes from one round of translation to another. The chain is Ribosome-recycling factor from Alkalilimnicola ehrlichii (strain ATCC BAA-1101 / DSM 17681 / MLHE-1).